The sequence spans 260 residues: Exosome complex component Rrp4 (260 aa).

Positions 59–128 (NDVVIGVVIV…SSMKIELALR (70 aa)) constitute an S1 motif domain. The region spanning 136–194 (RTGQIVEVEPVKVPRVIGHGGSMISMLKKETNCSIFVGQNGRIWIDGKDEDIELLSKAL) is the KH domain.

This sequence belongs to the RRP4 family. In terms of assembly, component of the archaeal exosome complex. Forms a trimer of Rrp4 and/or Csl4 subunits. The trimer associates with a hexameric ring-like arrangement composed of 3 Rrp41-Rrp42 heterodimers.

The protein localises to the cytoplasm. Functionally, non-catalytic component of the exosome, which is a complex involved in RNA degradation. Increases the RNA binding and the efficiency of RNA degradation. Confers strong poly(A) specificity to the exosome. This is Exosome complex component Rrp4 from Methanosarcina mazei (strain ATCC BAA-159 / DSM 3647 / Goe1 / Go1 / JCM 11833 / OCM 88) (Methanosarcina frisia).